We begin with the raw amino-acid sequence, 181 residues long: Protein Syd (181 aa).

It belongs to the Syd family.

The protein resides in the cell inner membrane. In terms of biological role, interacts with the SecY protein in vivo. May bind preferentially to an uncomplexed state of SecY, thus functioning either as a chelating agent for excess SecY in the cell or as a regulatory factor that negatively controls the translocase function. The polypeptide is Protein Syd (Shigella flexneri serotype 5b (strain 8401)).